The chain runs to 82 residues: Sec-independent protein translocase protein TatA (82 aa).

Residues 1-21 traverse the membrane as a helical segment; the sequence is MGGISIWQLLIIAVIIVLLFG. The segment at 46–82 is disordered; it reads DEPAKDAKKDADFVPQNLEKKEAETVEKQKQNDKEQA.

Belongs to the TatA/E family. As to quaternary structure, the Tat system comprises two distinct complexes: a TatABC complex, containing multiple copies of TatA, TatB and TatC subunits, and a separate TatA complex, containing only TatA subunits. Substrates initially bind to the TatABC complex, which probably triggers association of the separate TatA complex to form the active translocon.

The protein resides in the cell inner membrane. Part of the twin-arginine translocation (Tat) system that transports large folded proteins containing a characteristic twin-arginine motif in their signal peptide across membranes. TatA could form the protein-conducting channel of the Tat system. This is Sec-independent protein translocase protein TatA from Aliivibrio fischeri (strain MJ11) (Vibrio fischeri).